A 698-amino-acid chain; its full sequence is tRNA (guanine(37)-N(1))-methyltransferase (698 aa).

The segment at 207–242 (SPPSVSLTENQDGDPQAQDSLRAVAAPPSPSSRKRG) is disordered. S-adenosyl-L-methionine contacts are provided by residues His-427, 465-466 (DL), 494-495 (DG), and Asn-536.

The protein belongs to the class I-like SAM-binding methyltransferase superfamily. TRM5/TYW2 family. In terms of assembly, monomer.

The protein resides in the mitochondrion matrix. Its subcellular location is the nucleus. It localises to the cytoplasm. It catalyses the reaction guanosine(37) in tRNA + S-adenosyl-L-methionine = N(1)-methylguanosine(37) in tRNA + S-adenosyl-L-homocysteine + H(+). Its function is as follows. Specifically methylates the N1 position of guanosine-37 in various cytoplasmic and mitochondrial tRNAs. Methylation is not dependent on the nature of the nucleoside 5' of the target nucleoside. This is the first step in the biosynthesis of wybutosine (yW), a modified base adjacent to the anticodon of tRNAs and required for accurate decoding. The protein is tRNA (guanine(37)-N(1))-methyltransferase of Leishmania braziliensis.